Consider the following 254-residue polypeptide: Triosephosphate isomerase (254 aa).

Asparagine 12–lysine 14 contributes to the substrate binding site. Residue histidine 99 is the Electrophile of the active site. The active-site Proton acceptor is glutamate 169. Residues glycine 175, serine 214, and glycine 235–glycine 236 contribute to the substrate site.

It belongs to the triosephosphate isomerase family. In terms of assembly, homodimer.

The protein resides in the cytoplasm. It catalyses the reaction D-glyceraldehyde 3-phosphate = dihydroxyacetone phosphate. It functions in the pathway carbohydrate biosynthesis; gluconeogenesis. It participates in carbohydrate degradation; glycolysis; D-glyceraldehyde 3-phosphate from glycerone phosphate: step 1/1. Its function is as follows. Involved in the gluconeogenesis. Catalyzes stereospecifically the conversion of dihydroxyacetone phosphate (DHAP) to D-glyceraldehyde-3-phosphate (G3P). This is Triosephosphate isomerase from Brucella melitensis biotype 1 (strain ATCC 23456 / CCUG 17765 / NCTC 10094 / 16M).